A 196-amino-acid polypeptide reads, in one-letter code: MSEKATEIANLLSPTVESLGLELLGVEYLPAPGGATLRLYIDVPLAEQPERVINVDDCERVSREVSAQLDVEDPISGNYTLEVSSPGVDRPLFTLEQFARHTGESAKIVLKLAQDGRRRFQGEILRIDAEAEAVVFAVDGKDVQIGYDNIDKARIVPDWVALGLAPQKPNKPGPKKPGHEKKKPSNESAAGKPRAE.

The tract at residues 164–196 is disordered; it reads LAPQKPNKPGPKKPGHEKKKPSNESAAGKPRAE. The span at 173 to 182 shows a compositional bias: basic residues; that stretch reads GPKKPGHEKK.

It belongs to the RimP family.

It localises to the cytoplasm. In terms of biological role, required for maturation of 30S ribosomal subunits. This is Ribosome maturation factor RimP from Xanthomonas euvesicatoria pv. vesicatoria (strain 85-10) (Xanthomonas campestris pv. vesicatoria).